A 571-amino-acid polypeptide reads, in one-letter code: Sulfite reductase [NADPH] hemoprotein beta-component (571 aa).

The [4Fe-4S] cluster site is built by Cys436, Cys442, Cys481, and Cys485. Cys485 contributes to the siroheme binding site.

The protein belongs to the nitrite and sulfite reductase 4Fe-4S domain family. As to quaternary structure, alpha(8)-beta(8). The alpha component is a flavoprotein, the beta component is a hemoprotein. Requires siroheme as cofactor. The cofactor is [4Fe-4S] cluster.

It catalyses the reaction hydrogen sulfide + 3 NADP(+) + 3 H2O = sulfite + 3 NADPH + 4 H(+). The protein operates within sulfur metabolism; hydrogen sulfide biosynthesis; hydrogen sulfide from sulfite (NADPH route): step 1/1. Functionally, component of the sulfite reductase complex that catalyzes the 6-electron reduction of sulfite to sulfide. This is one of several activities required for the biosynthesis of L-cysteine from sulfate. This chain is Sulfite reductase [NADPH] hemoprotein beta-component (cysI), found in Bacillus subtilis (strain 168).